Reading from the N-terminus, the 552-residue chain is ATP synthase subunit alpha, mitochondrial (552 aa).

Residues 1 to 47 (MSIFSARLASSVARNLPKAANQVACKAAYPAASLAARKLHVASTQRS) constitute a mitochondrion transit peptide. 211–218 (GDRQTGKT) serves as a coordination point for ATP.

The protein belongs to the ATPase alpha/beta chains family. F-type ATPases have 2 components, CF(1) - the catalytic core - and CF(0) - the membrane proton channel. CF(1) has five subunits: alpha(3), beta(3), gamma(1), delta(1), epsilon(1). CF(0) has three main subunits: a, b and c.

Its subcellular location is the mitochondrion inner membrane. Functionally, mitochondrial membrane ATP synthase (F(1)F(0) ATP synthase or Complex V) produces ATP from ADP in the presence of a proton gradient across the membrane which is generated by electron transport complexes of the respiratory chain. F-type ATPases consist of two structural domains, F(1) - containing the extramembraneous catalytic core, and F(0) - containing the membrane proton channel, linked together by a central stalk and a peripheral stalk. During catalysis, ATP synthesis in the catalytic domain of F(1) is coupled via a rotary mechanism of the central stalk subunits to proton translocation. Subunits alpha and beta form the catalytic core in F(1). Rotation of the central stalk against the surrounding alpha(3)beta(3) subunits leads to hydrolysis of ATP in three separate catalytic sites on the beta subunits. Subunit alpha does not bear the catalytic high-affinity ATP-binding sites. This is ATP synthase subunit alpha, mitochondrial (blw) from Drosophila melanogaster (Fruit fly).